A 332-amino-acid polypeptide reads, in one-letter code: Homeobox protein DLX-2 (332 aa).

Residues 19 to 28 show a composition bias toward polar residues; sequence ASSTYHQHQQ. The disordered stretch occupies residues 19 to 83; it reads ASSTYHQHQQ…QHPAGGGGGG (65 aa). The span at 40–49 shows a compositional bias: low complexity; the sequence is NSNSSSSNSS. The segment covering 55–75 has biased composition (polar residues); it reads ESPTLPVSTATDSSYYTNQQH. A DNA-binding region (homeobox) is located at residues 155–214; it reads VRKPRTIYSSFQLAALQRRFQKTQYLALPERAELAASLGLTQTQVKIWFQNRRSKFKKMW. Disordered stretches follow at residues 219–272 and 304–332; these read IPTE…SSPS and PSQT…GTIF. S235 carries the phosphoserine modification. A compositionally biased stretch (gly residues) spans 253–266; that stretch reads AGGGPGSGGGGAGS. Residues 310 to 320 show a composition bias toward basic residues; the sequence is AHHHHHHHHHA.

This sequence belongs to the distal-less homeobox family. As to quaternary structure, interacts (via homeobox DNA-binding domain) with POU4F2; this interaction enhances retinal ganglion cell (RGC) differentiation. In terms of processing, phosphorylated by serine/threonine kinases. Expressed only in neural and other ectodermal structures of the head: the brain, the vomeronasal organ, and the preameloblasts of the teeth. Primarily expressed in the germinal cells of the ventral forebrain in the midgestational embryo, and in both dorsal and ventral ventricular zones in late embryogenesis and early postnatal life. Expressed in the inner nuclear layer of the retina.

Its subcellular location is the nucleus. Functionally, acts as a transcriptional activator. Activates transcription of CGA/alpha-GSU, via binding to the downstream activin regulatory element (DARE) in the gene promoter. Plays a role in terminal differentiation of interneurons, such as amacrine and bipolar cells in the developing retina. Likely to play a regulatory role in the development of the ventral forebrain. May play a role in craniofacial patterning and morphogenesis. The polypeptide is Homeobox protein DLX-2 (Dlx2) (Mus musculus (Mouse)).